A 510-amino-acid polypeptide reads, in one-letter code: MGSPEEQSVPGDDFNEESTDPNKNLSLVSGPADSNEGEIRLPSPKGSNLPLVSQQDTSEAPSVVLWTGGCWPDSLVSEEERLGSPEDEKMDGLDFLSQPSVETEQQVANPETPGAKEQPSSESFCAETETGSNRRAPQASGSEEAKAASAATFLPKGLEQSRAWVSPRKSTTSRMLISENVHHPPSEPELSEELNEVQMMRVTICLKDGNHGNQAKNSGPAETGDLARHSNVQTRESFMRMPSSLLTTTRGLTSGMERQTSKELEPFSSKKKQGILWGKGGSKSNYAEAAAGVGALPKAGPRKKMTQKKKPLWDASAVTLGKAFHQWGQRLKSAPAEPATFPPISGVGLPGRSNKCSLLPLRPKQCKNFYTGKRSGAKRTKELQLVAKEDTDSTRDPGSQVQFPTCRAEPPCQSVHQEFSSGDINTRSLQDPGNSQSSGLSQRGILSKKSTPSGDQEEPVGPPAPDSEILQLHGTQGCPRCPELQKEIEDLRKQLSALQAVGEKFQTHST.

Disordered stretches follow at residues 1-154 (MGSP…ATFL), 208-227 (DGNH…GDLA), 234-276 (TRES…QGIL), and 368-480 (NFYT…GCPR). Ser43 is subject to Phosphoserine. Over residues 50–60 (PLVSQQDTSEA) the composition is skewed to polar residues. The segment covering 78–92 (EEERLGSPEDEKMDG) has biased composition (basic and acidic residues). Phosphoserine is present on Ser84. Polar residues-rich tracts occupy residues 97-109 (SQPS…QVAN) and 118-135 (QPSS…SNRR). Ser120 carries the post-translational modification Phosphoserine. A compositionally biased stretch (low complexity) spans 139–151 (ASGSEEAKAASAA). The span at 243-255 (SSLLTTTRGLTSG) shows a compositional bias: low complexity. Positions 379–395 (RTKELQLVAKEDTDSTR) are enriched in basic and acidic residues. Over residues 414–441 (SVHQEFSSGDINTRSLQDPGNSQSSGLS) the composition is skewed to polar residues.

This is an uncharacterized protein from Rattus norvegicus (Rat).